Reading from the N-terminus, the 131-residue chain is Profilin (131 aa).

It belongs to the profilin family. As to quaternary structure, occurs in many kinds of cells as a complex with monomeric actin in a 1:1 ratio.

Its subcellular location is the cytoplasm. It localises to the cytoskeleton. Binds to actin and affects the structure of the cytoskeleton. At high concentrations, profilin prevents the polymerization of actin, whereas it enhances it at low concentrations. By binding to PIP2, it inhibits the formation of IP3 and DG. The polypeptide is Profilin (Chenopodium album (Fat hen)).